The following is a 218-amino-acid chain: Ras-related protein Rab-27B (218 aa).

Thr2 carries the post-translational modification N-acetylthreonine. 16-24 (GDSGVGKTT) contacts GTP. The short motif at 38–46 (FITTVGIDF) is the Effector region element. Residues 74–78 (DTAGQ), 133–136 (NKAD), and 163–165 (SAA) contribute to the GTP site. A disulfide bond links Cys123 and Cys188. S-geranylgeranyl cysteine attachment occurs at residues Cys216 and Cys218. Cys218 carries the post-translational modification Cysteine methyl ester.

This sequence belongs to the small GTPase superfamily. Rab family. In terms of assembly, interacts with SYTL2, SYTL4, MYRIP and MLPH. Interacts with RPH3A and RPH3A. Interacts (GDP-bound form preferentially) with DENND10.

It localises to the membrane. The protein localises to the late endosome. The enzyme catalyses GTP + H2O = GDP + phosphate + H(+). Regulated by guanine nucleotide exchange factors (GEFs) which promote the exchange of bound GDP for free GTP, GTPase activating proteins (GAPs) which increase the GTP hydrolysis activity, and GDP dissociation inhibitors which inhibit the dissociation of the nucleotide from the GTPase. Activated by GEFs such as DENND10. Functionally, small GTPase which cycles between active GTP-bound and inactive GDP-bound states. In its active state, binds to a variety of effector proteins to regulate homeostasis of late endocytic pathway, including endosomal positioning, maturation and secretion. Plays a role in NTRK2/TRKB axonal anterograde transport by facilitating the association of NTRK2/TRKB with KLC1. May be involved in targeting uroplakins to urothelial apical membranes. The sequence is that of Ras-related protein Rab-27B (Rab27b) from Rattus norvegicus (Rat).